Consider the following 52-residue polypeptide: UPF0181 protein NTHI1697 (52 aa).

It belongs to the UPF0181 family.

The polypeptide is UPF0181 protein NTHI1697 (Haemophilus influenzae (strain 86-028NP)).